The sequence spans 449 residues: MAALAVLRYAGSSPLLWGWGPILFGLLGSVFVLLLPLVGIEEQCCATLKGLALLRCQMWGGIQRPVVHTTSLAVPFTALDLLPQKVKPSKETQLEAKAALQQALEMKKSGKREKAHKLLVHALNMNPEFVEALTELGTILEEEKDVVQADHLYTKALAISPCHEKALVSRDRTLPLVEEIDQRHFGIIDGKVRRLMSIPKGNSALRRVMEETYYHHIYHTVAIEGNTLTLSEIRHIIETRYAVPGKSLQEQNEAIGVDVAMKYINTTLLSRDGAITVNDILEIHRRVLGYADPVEAGRFRVNQVFVGHHIPPHPQDLDKHMQELVQWLNSEETLHLHPVEFAALAHYKLVYVHPFVDGNGRTSRLLMNLILMQASYPPITIRKEQRAEYYAALDTANEGDVRPFIRFIAKCTEMTLDTLLIATTEHAVGLPGASNHACPDCKQTIPVHS.

A helical transmembrane segment spans residues 15–35 (LLWGWGPILFGLLGSVFVLLL). TPR repeat units lie at residues 96 to 129 (AKAA…NPEF) and 130 to 163 (VEAL…SPCH). Positions 220-225 (TVAIEG) match the Inhibitory (S/T)XXXE(G/N) motif motif. ATP is bound by residues E224, 250-251 (EQ), 358-360 (GNG), and R364. A Fido domain is found at 275–410 (ITVNDILEIH…VRPFIRFIAK (136 aa)).

This sequence belongs to the fic family.

Its subcellular location is the membrane. It carries out the reaction L-tyrosyl-[protein] + ATP = O-(5'-adenylyl)-L-tyrosyl-[protein] + diphosphate. It catalyses the reaction L-threonyl-[protein] + ATP = 3-O-(5'-adenylyl)-L-threonyl-[protein] + diphosphate. Adenylyltransferase activity is inhibited by the inhibitory helix present at the N-terminus: Glu-224 binds ATP and competes with ATP-binding at Arg-364, thereby preventing adenylyltransferase activity. Activation dissociates ATP-binding from Glu-224, allowing ordered binding of the entire ATP moiety with the alpha-phosphate in an orientation that is productive for accepting an incoming target hydroxyl side chain. Functionally, adenylyltransferase that mediates the addition of adenosine 5'-monophosphate (AMP) to specific residues of target proteins. In Danio rerio (Zebrafish), this protein is Protein adenylyltransferase FICD (ficd).